A 52-amino-acid chain; its full sequence is Large ribosomal subunit protein bL33 (52 aa).

The protein belongs to the bacterial ribosomal protein bL33 family.

This Anaeromyxobacter dehalogenans (strain 2CP-C) protein is Large ribosomal subunit protein bL33.